Reading from the N-terminus, the 385-residue chain is MNVFWFIPTHGDSRYLGTAEGARAADYDYFRQVAVAADTLGYDGVLLPTGRSCEDAWVVASSLIPATKRLKFLVAIRPGLSSPGLSARMASTFDRLSDGRLLINVVTGGDSAELEGDGLFADHDTRYAITDDFLHIWRGLLAESHENGGIDFDGEHLSAKGGKLLYPPVQRPHPPLWFGGSSPAAHAIAADHIDTYLSWGEPPAAVEKKIADIRARAAARGREIKFGIRLHVIVRETQEEAWRDADRLISRLDDDTIARAQQAFAKMDSEGQRRMAALHGGKRGSRQELEIYPNLWAGVGLVRGGAGTALVGNPEQIAARMREYAALGIETFILSGYPHLEESYRFAELVFPLVKGGGNTRRAGPLSGPFGEVVGNQYLPKASQS.

This sequence belongs to the SsuD family.

The catalysed reaction is an alkanesulfonate + FMNH2 + O2 = an aldehyde + FMN + sulfite + H2O + 2 H(+). Functionally, catalyzes the desulfonation of aliphatic sulfonates. In Burkholderia pseudomallei (strain 1710b), this protein is Alkanesulfonate monooxygenase.